Consider the following 84-residue polypeptide: Large ribosomal subunit protein bL27 (84 aa).

The disordered stretch occupies residues 1–27; the sequence is MAHKKGQGASRNGRDSKSKRLGVKVGA.

It belongs to the bacterial ribosomal protein bL27 family.

This Chlamydia pneumoniae (Chlamydophila pneumoniae) protein is Large ribosomal subunit protein bL27.